Reading from the N-terminus, the 417-residue chain is Imidazolonepropionase (417 aa).

Fe(3+) contacts are provided by His80 and His82. His80 and His82 together coordinate Zn(2+). 4-imidazolone-5-propanoate contacts are provided by Arg89, Tyr152, and His187. Tyr152 contributes to the N-formimidoyl-L-glutamate binding site. His252 serves as a coordination point for Fe(3+). A Zn(2+)-binding site is contributed by His252. Glu255 serves as a coordination point for 4-imidazolone-5-propanoate. Residue Asp326 participates in Fe(3+) binding. Zn(2+) is bound at residue Asp326. N-formimidoyl-L-glutamate contacts are provided by Asn328 and Gly330. Position 331 (Ser331) interacts with 4-imidazolone-5-propanoate.

The protein belongs to the metallo-dependent hydrolases superfamily. HutI family. Requires Zn(2+) as cofactor. Fe(3+) is required as a cofactor.

The protein resides in the cytoplasm. The enzyme catalyses 4-imidazolone-5-propanoate + H2O = N-formimidoyl-L-glutamate. It functions in the pathway amino-acid degradation; L-histidine degradation into L-glutamate; N-formimidoyl-L-glutamate from L-histidine: step 3/3. Functionally, catalyzes the hydrolytic cleavage of the carbon-nitrogen bond in imidazolone-5-propanoate to yield N-formimidoyl-L-glutamate. It is the third step in the universal histidine degradation pathway. This is Imidazolonepropionase from Bacteroides fragilis (strain ATCC 25285 / DSM 2151 / CCUG 4856 / JCM 11019 / LMG 10263 / NCTC 9343 / Onslow / VPI 2553 / EN-2).